Consider the following 469-residue polypeptide: Keratin, type I cytoskeletal 26 (469 aa).

Positions 1-82 (MSFRLSSGSR…ENEHGLLPGN (82 aa)) are head. The tract at residues 83–118 (EKVTLQNLNDRLASYLDHVCTLEEANADLEQKIKGW) is coil 1A. One can recognise an IF rod domain in the interval 83 to 398 (EKVTLQNLND…KLIDGEGRKS (316 aa)). Residues 119-140 (YEKYGPGSGRQLAYDCSKYFSV) are linker 1. The interval 141-232 (TEDLKRQIIS…KNHQEEMKVM (92 aa)) is coil 1B. The linker 12 stretch occupies residues 233–255 (QGAAGGNVNVEINAAPGVDLTVL). Residues 256–394 (LNNMRAEYED…EMYCKLIDGE (139 aa)) form a coil 2 region. The segment at 395 to 465 (GRKSKSTYCK…NITMEQRLPS (71 aa)) is tail. Disordered stretches follow at residues 398–421 (SKST…KDSK) and 450–469 (KSSK…KVPQ). Residues 405–421 (SEGRGPKNSENQVKDSK) show a composition bias toward basic and acidic residues.

The protein belongs to the intermediate filament family. As to quaternary structure, heterotetramer of two type I and two type II keratins.

This is Keratin, type I cytoskeletal 26 from Bos taurus (Bovine).